The primary structure comprises 300 residues: MLKVPEHQVAGHIASDGKLGPLVDDQGRFFKPLQGDSRGEHEAKFYESFTSNMKVPDHIHRYFPVYHGTQLVEASDGSGKLPHLVLDDVVSGYANPSVMDVKIGSRTWYPDVSEEYFKKCIKKDRQTTTVSLGFRVSGFKIFDHQESSFWRAEKKLVLGYNADGARLALRKFVSSNSPADSNLTPNCAFASEVYGGCNGILAQLLELKDWFETQTLYHFNSCSILMIYENESILMQGGDDAPAPRAQVKLVDFAHVLDGNGVIDHNFLGGLCSFIKFIKDILQSVEKHDETDTSLLENGR.

Phosphoserine is present on Ser-78.

This sequence belongs to the inositol phosphokinase (IPK) family. Interacts with KIN10 and KIN11. Phosphorylated by KIN10. Expressed in leaves, stems, roots, siliques and flowers. Detected in vascular strands, stigma cells, the abscission zones of fully elongated siliques, the root central cylinder and the root tip.

It is found in the nucleus. It carries out the reaction 1D-myo-inositol 1,4,5-trisphosphate + 2 ATP = 1D-myo-inositol 1,3,4,5,6-pentakisphosphate + 2 ADP + 2 H(+). It catalyses the reaction 1D-myo-inositol 1,3,4,6-tetrakisphosphate + ATP = 1D-myo-inositol 1,3,4,5,6-pentakisphosphate + ADP + H(+). With respect to regulation, down-regulated by KIN10 through its protein phosphorylation. Inositol phosphate kinase with a broad substrate specificity. Phosphorylates inositol 1,4,5-trisphosphate (Ins(1,4,5)P3), inositol 1,4,5,6-tetrakisphosphate (Ins(1,4,5,6)P4), inositol 1,3,4,5-tetrakisphosphate (Ins(1,3,4,5)P4), inositol 1,3,4,6-tetrakisphosphate (Ins(1,3,4,6)P4) and inositol 1,2,3,4,6-pentakisphosphate (Ins(1,2,3,4,6)P5) but not inositol 1,4-bisphosphate (Ins(1,4)P2), inositol 1,3,4-trisphosphate (Ins(1,3,4)P3), inositol 1,2,6-trisphosphate (Ins(1,2,6)P3), inositol 3,4,5,6-tetrakisphosphate (Ins(3,4,5,6)P4), inositol 1,3,4,5,6-pentakisphosphate (Ins(1,3,4,5,6)P5), inositol 1,2,4,5,6-pentakisphosphate (Ins(1,2,4,5,6)P5) or inositol hexakisphosphate (InsP6). Involved in the auxin signaling pathway. Regulates axillary shoot branching and is required for phytate synthesis in seeds. In Arabidopsis thaliana (Mouse-ear cress), this protein is Inositol polyphosphate multikinase beta (IPK2b).